The sequence spans 2215 residues: Unconventional myosin-VIIa (2215 aa).

Positions 65–741 (HGVEDMIRLG…HDMLLEVERD (677 aa)) constitute a Myosin motor domain. 158 to 165 (GESGAGKT) contributes to the ATP binding site. Residues 632–639 (FVRCIKPN) form an actin-binding region. 5 consecutive IQ domains span residues 745 to 765 (TDRV…SNFL), 768 to 788 (KSAA…KNYE), 791 to 811 (RLGF…KQYR), 814 to 834 (RQRI…KAFR), and 837 to 857 (LWAV…RLHR). The tract at residues 858–935 (RLRVEYQRRL…LEQMEKARHE (78 aa)) is SAH. Positions 1017-1253 (YTRRPLKQPL…PSWLELQATK (237 aa)) constitute a MyTH4 1 domain. The FERM 1 domain occupies 1258-1602 (IMLPVTFMDG…LVVTFLEGLR (345 aa)). A Phosphothreonine modification is found at Thr-1563. Phosphoserine is present on Ser-1569. The residue at position 1571 (Thr-1571) is a Phosphothreonine. The SH3 domain occupies 1603 to 1672 (KRSKYVVALQ…PTDCVYVMPT (70 aa)). In terms of domain architecture, MyTH4 2 spans 1747 to 1896 (HTREPLKQAL…PHLVEVEAIQ (150 aa)). The 304-residue stretch at 1902–2205 (IFHKVYFPDD…SYISQMLTAM (304 aa)) folds into the FERM 2 domain.

It belongs to the TRAFAC class myosin-kinesin ATPase superfamily. Myosin family. Might homodimerize in a two headed molecule through the formation of a coiled-coil rod. Identified in a complex with USH1C and USH1G. Interacts with MYRIP. Interacts with RPE65. Interacts with CIB2. May interact with CALM. Interacts with WHRN. Interacts with PLEKHB1 (via PH domain). Interacts with PCDH15. Interacts with TWF2. Interacts with USH1G. Interacts with MYH9. Interacts (via MyTH4-FERM domains) with cytoplasmic regions of ADGRV1 and USH2A. Interacts with PDZD7 (via MyTH4-FERM domains). Interacts with CALML4. In terms of tissue distribution, detected in mechanosensory stereocilia of cochlea hair cells (at protein level). Expressed in the retina, cochlea, kidney and liver.

The protein resides in the cytoplasm. It is found in the cell cortex. Its subcellular location is the cytoskeleton. The protein localises to the synapse. In terms of biological role, myosins are actin-based motor molecules with ATPase activity. Unconventional myosins serve in intracellular movements. Their highly divergent tails bind to membranous compartments, which are then moved relative to actin filaments. In the retina, plays an important role in the renewal of the outer photoreceptor disks. Plays an important role in the distribution and migration of retinal pigment epithelial (RPE) melanosomes and phagosomes, and in the regulation of opsin transport in retinal photoreceptors. Mediates intracellular transport of RPE65 in the retina pigment epithelium. In the inner ear, plays an important role in differentiation, morphogenesis and organization of cochlear hair cell bundles. Motor protein that is a part of the functional network formed by USH1C, USH1G, CDH23 and MYO7A that mediates mechanotransduction in cochlear hair cells. Required for normal hearing. Involved in hair-cell vesicle trafficking of aminoglycosides, which are known to induce ototoxicity. This chain is Unconventional myosin-VIIa (Myo7a), found in Mus musculus (Mouse).